The following is a 258-amino-acid chain: Tryptophan synthase alpha chain (258 aa).

Catalysis depends on proton acceptor residues glutamate 52 and aspartate 63.

This sequence belongs to the TrpA family. As to quaternary structure, tetramer of two alpha and two beta chains.

It carries out the reaction (1S,2R)-1-C-(indol-3-yl)glycerol 3-phosphate + L-serine = D-glyceraldehyde 3-phosphate + L-tryptophan + H2O. The protein operates within amino-acid biosynthesis; L-tryptophan biosynthesis; L-tryptophan from chorismate: step 5/5. The alpha subunit is responsible for the aldol cleavage of indoleglycerol phosphate to indole and glyceraldehyde 3-phosphate. The chain is Tryptophan synthase alpha chain from Streptococcus pneumoniae (strain ATCC 700669 / Spain 23F-1).